A 332-amino-acid chain; its full sequence is Fructose-bisphosphate aldolase (332 aa).

Residue S56 participates in D-glyceraldehyde 3-phosphate binding. The Proton donor role is filled by D93. Zn(2+)-binding residues include H94, D115, E147, and H191. Residue G192 participates in dihydroxyacetone phosphate binding. H234 lines the Zn(2+) pocket. Dihydroxyacetone phosphate-binding positions include 235-237 and 277-280; these read GAS and NIDS.

It belongs to the class II fructose-bisphosphate aldolase family. Homodimer. It depends on Zn(2+) as a cofactor.

The catalysed reaction is beta-D-fructose 1,6-bisphosphate = D-glyceraldehyde 3-phosphate + dihydroxyacetone phosphate. It functions in the pathway carbohydrate degradation; glycolysis; D-glyceraldehyde 3-phosphate and glycerone phosphate from D-glucose: step 4/4. Its function is as follows. Catalyzes the aldol condensation of dihydroxyacetone phosphate (DHAP or glycerone-phosphate) with glyceraldehyde 3-phosphate (G3P) to form fructose 1,6-bisphosphate (FBP) in gluconeogenesis and the reverse reaction in glycolysis. This is Fructose-bisphosphate aldolase (fba) from Treponema pallidum (strain Nichols).